Reading from the N-terminus, the 563-residue chain is CTP synthase (563 aa).

An amidoligase domain region spans residues 1-280; sequence MTKFVFVTGG…DEMICMKLQL (280 aa). CTP is bound at residue Ser13. Ser13 is a binding site for UTP. Residues 14–19 and Asp71 contribute to the ATP site; that span reads SLGKGI. Mg(2+) is bound by residues Asp71 and Glu154. Residues 161–163, 201–206, and Lys237 each bind CTP; these read DIE and KTKPTQ. UTP is bound by residues 201–206 and Lys237; that span reads KTKPTQ. The 253-residue stretch at 305–557 folds into the Glutamine amidotransferase type-1 domain; the sequence is TIAMAGKYTE…IAAALEHHAA (253 aa). Gly366 contributes to the L-glutamine binding site. The active-site Nucleophile; for glutamine hydrolysis is Cys393. L-glutamine is bound by residues 394–397, Glu417, and Arg483; that span reads LGMQ. Active-site residues include His530 and Glu532.

The protein belongs to the CTP synthase family. In terms of assembly, homotetramer.

It catalyses the reaction UTP + L-glutamine + ATP + H2O = CTP + L-glutamate + ADP + phosphate + 2 H(+). The enzyme catalyses L-glutamine + H2O = L-glutamate + NH4(+). It carries out the reaction UTP + NH4(+) + ATP = CTP + ADP + phosphate + 2 H(+). It functions in the pathway pyrimidine metabolism; CTP biosynthesis via de novo pathway; CTP from UDP: step 2/2. Its activity is regulated as follows. Allosterically activated by GTP, when glutamine is the substrate; GTP has no effect on the reaction when ammonia is the substrate. The allosteric effector GTP functions by stabilizing the protein conformation that binds the tetrahedral intermediate(s) formed during glutamine hydrolysis. Inhibited by the product CTP, via allosteric rather than competitive inhibition. In terms of biological role, catalyzes the ATP-dependent amination of UTP to CTP with either L-glutamine or ammonia as the source of nitrogen. Regulates intracellular CTP levels through interactions with the four ribonucleotide triphosphates. This Leptothrix cholodnii (strain ATCC 51168 / LMG 8142 / SP-6) (Leptothrix discophora (strain SP-6)) protein is CTP synthase.